A 361-amino-acid polypeptide reads, in one-letter code: Protein RecA (361 aa).

Position 77 to 84 (77 to 84) interacts with ATP; it reads GPESSGKT.

Belongs to the RecA family.

The protein localises to the cytoplasm. Functionally, can catalyze the hydrolysis of ATP in the presence of single-stranded DNA, the ATP-dependent uptake of single-stranded DNA by duplex DNA, and the ATP-dependent hybridization of homologous single-stranded DNAs. It interacts with LexA causing its activation and leading to its autocatalytic cleavage. This Sinorhizobium medicae (strain WSM419) (Ensifer medicae) protein is Protein RecA.